A 549-amino-acid chain; its full sequence is Probable protein kinase UbiB (549 aa).

A Protein kinase domain is found at Asp123–Leu501. Residues Leu129–Val137 and Lys152 each bind ATP. Asp287 acts as the Proton acceptor in catalysis. The next 2 membrane-spanning stretches (helical) occupy residues Ser498–Gln518 and Ala520–Trp540.

This sequence belongs to the ABC1 family. UbiB subfamily.

The protein resides in the cell inner membrane. It functions in the pathway cofactor biosynthesis; ubiquinone biosynthesis [regulation]. Functionally, is probably a protein kinase regulator of UbiI activity which is involved in aerobic coenzyme Q (ubiquinone) biosynthesis. This Shewanella sp. (strain ANA-3) protein is Probable protein kinase UbiB.